The primary structure comprises 271 residues: MDKYAVWGNPIAQSKSPQLHRYFAKQTRQNLDYVAILGDEEKFEQQLSDFFAQGAKGCNITAPFKERAFKLAQQHSKRCLSAESCNTLKKLADGTLFADNTDGAGLVSDLQRLNWLKPNQRILILGAGGATKGVLLPLLQAQQNILITNRTFSRAEDLAHKFNQFGTIEALDLKHIPIQTFDLIINATSTGLQGKTIDINPQILQLASAVYDMQYSKESDTPFIALCKKQGVTKISDGFGMLVGQAAHAFYLWRGVMPEIDPLFSGNEIKI.

Shikimate is bound by residues 14–16 (SKS) and Thr61. Lys65 functions as the Proton acceptor in the catalytic mechanism. 2 residues coordinate shikimate: Asn86 and Asp102. NADP(+) contacts are provided by residues 126–130 (GAGGA), 149–154 (NRTFSR), and Met213. Tyr215 contributes to the shikimate binding site. Residue Gly238 participates in NADP(+) binding.

It belongs to the shikimate dehydrogenase family. As to quaternary structure, homodimer.

The enzyme catalyses shikimate + NADP(+) = 3-dehydroshikimate + NADPH + H(+). It functions in the pathway metabolic intermediate biosynthesis; chorismate biosynthesis; chorismate from D-erythrose 4-phosphate and phosphoenolpyruvate: step 4/7. Its function is as follows. Involved in the biosynthesis of the chorismate, which leads to the biosynthesis of aromatic amino acids. Catalyzes the reversible NADPH linked reduction of 3-dehydroshikimate (DHSA) to yield shikimate (SA). In Histophilus somni (strain 2336) (Haemophilus somnus), this protein is Shikimate dehydrogenase (NADP(+)).